A 189-amino-acid polypeptide reads, in one-letter code: Probable nicotinate-nucleotide adenylyltransferase (189 aa).

Belongs to the NadD family.

It catalyses the reaction nicotinate beta-D-ribonucleotide + ATP + H(+) = deamido-NAD(+) + diphosphate. Its pathway is cofactor biosynthesis; NAD(+) biosynthesis; deamido-NAD(+) from nicotinate D-ribonucleotide: step 1/1. Its function is as follows. Catalyzes the reversible adenylation of nicotinate mononucleotide (NaMN) to nicotinic acid adenine dinucleotide (NaAD). The polypeptide is Probable nicotinate-nucleotide adenylyltransferase (Bacillus cereus (strain ATCC 10987 / NRS 248)).